Reading from the N-terminus, the 1039-residue chain is MHQKTPEIYSVELSGTKDIVKTDKGDGKEKYRGLKNNCLELKKKNHKEEFQKELHLDDHKLSNRELEEKYGTDIIMGLSSTRAAELLARDGPNSLTPPKQTPEIVKFLKQMVGGFSILLWVGAFLCWIAYGIQYSSDKSASLNNVYLGCVLGLVVILTGIFAYYQEAKSTNIMSSFNKMIPQQALVIRDSEKKTIPSEQLVVGDIVEVKGGDQIPADIRVLSSQGCRVDNSSLTGESEPQPRSSEFTHENPLETKNICFYSTTCLEGTVTGMVINTGDRTIIGHIASLASGVGNEKTPIAIEIEHFVHIVAGVAVSIGILFFIIAVSLKYQVLDSIIFLIGIIVANVPEGLLATVTVTLSLTAKRMAKKNCLVKNLEAVETLGSTSIICSDKTGTLTQNRMTVAHLWFDNQIFVADTSEDHSNQVFDQSSRTWASLSKIITLCNRAEFKPGQENVPIMKKAVIGDASETALLKFSEVILGDVMEIRKRNRKVAEIPFNSTNKFQLSIHEMDDPHGKRFLMVMKGAPERILEKCSTIMINGEEHPLDKSTAKTFHTAYMELGGLGERVLGFCHLYLPADEFPETYSFDIDAMNFPTSNLCFVGLLSMIDPPRSTVPDAVTKCRSAGIKVIMVTGDHPITAKAIAKSVGIISANSETVEDIAHRLNIAVEQVNKRDAKAAVVTGMELKDMSSEQLDEILANYQEIVFARTSPQQKLIIVEGCQRQDAVVAVTGDGVNDSPALKKADIGIAMGIAGSDAAKNAADMVLLDDNFASIVTGVEEGRLIFDNLKKTIAYSLTKNIAELCPFLIYIIVGLPLPIGTITILFIDLGTDIIPSIALAYEKAESDIMNRKPRHKNKDRLVNQPLAVYSYLHIGLMQALGAFLVYFTVYAQEGFLPRTLINLRVEWEKDYVNDLKDSYGQEWTRYQREYLEWTGYTAFFVGILVQQIADLIIRKTRRNSIFQQGLFRNKVIWVGITSQIIIGLILSYGLGSVTALSFTMLRAQYWFVAVPHAILIWVYDEVRKLFIRLYPGSWWDKNMYY.

The Cytoplasmic portion of the chain corresponds to 1 to 102 (MHQKTPEIYS…NSLTPPKQTP (102 aa)). Residues 103–123 (EIVKFLKQMVGGFSILLWVGA) form a helical membrane-spanning segment. Residues 124–146 (FLCWIAYGIQYSSDKSASLNNVY) lie on the Lumenal side of the membrane. The chain crosses the membrane as a helical span at residues 147–167 (LGCVLGLVVILTGIFAYYQEA). Residues 168 to 303 (KSTNIMSSFN…NEKTPIAIEI (136 aa)) lie on the Cytoplasmic side of the membrane. Residues 304–323 (EHFVHIVAGVAVSIGILFFI) traverse the membrane as a helical segment. Residues 324–335 (IAVSLKYQVLDS) lie on the Lumenal side of the membrane. Residues 336 to 353 (IIFLIGIIVANVPEGLLA) traverse the membrane as a helical segment. The Cytoplasmic segment spans residues 354–787 (TVTVTLSLTA…EEGRLIFDNL (434 aa)). Asp391 (4-aspartylphosphate intermediate) is an active-site residue. Mg(2+)-binding residues include Asp732 and Asp736. Residues 788 to 807 (KKTIAYSLTKNIAELCPFLI) form a helical membrane-spanning segment. Over 808–817 (YIIVGLPLPI) the chain is Lumenal. The chain crosses the membrane as a helical span at residues 818–838 (GTITILFIDLGTDIIPSIALA). Over 839-858 (YEKAESDIMNRKPRHKNKDR) the chain is Cytoplasmic. A helical transmembrane segment spans residues 859–881 (LVNQPLAVYSYLHIGLMQALGAF). The Lumenal portion of the chain corresponds to 882–933 (LVYFTVYAQEGFLPRTLINLRVEWEKDYVNDLKDSYGQEWTRYQREYLEWTG). Residues 934–953 (YTAFFVGILVQQIADLIIRK) traverse the membrane as a helical segment. At 954-967 (TRRNSIFQQGLFRN) the chain is on the cytoplasmic side. Residue Ser958 is modified to Phosphoserine; by PKA. Residues 968–986 (KVIWVGITSQIIIGLILSY) form a helical membrane-spanning segment. Topologically, residues 987-1001 (GLGSVTALSFTMLRA) are lumenal. A helical transmembrane segment spans residues 1002–1022 (QYWFVAVPHAILIWVYDEVRK). Residues 1023-1039 (LFIRLYPGSWWDKNMYY) lie on the Cytoplasmic side of the membrane.

The protein belongs to the cation transport ATPase (P-type) (TC 3.A.3) family. Type IIC subfamily. As to quaternary structure, the ATPase pump is composed of a catalytic alpha subunit and an auxiliary non-catalytic beta subunit. The alpha subunit pairs with the beta subunit of gastric H(+)/K(+) ATPase ATP4B or the beta subunit of Na(+)/K(+) ATPases ATP1B1 and ATP1B3; this interaction is required for the formation of a functionally active pump and its targeting at the plasma membrane. In terms of tissue distribution, expressed in airway epithelial cells (at protein level). Found in skin and kidney. Detected in prostate basal cells (at protein level). Expression is increased in benign prostate hyperplasia and tumor tissues (at protein level).

It localises to the apical cell membrane. It catalyses the reaction K(+)(out) + ATP + H2O + H(+)(in) = K(+)(in) + ADP + phosphate + 2 H(+)(out). The enzyme catalyses K(+)(out) + Na(+)(in) + ATP + H2O = K(+)(in) + Na(+)(out) + ADP + phosphate + H(+). With respect to regulation, the ATPase activity is regulated by monovalent cations and pH. Up-regulated by K(+) ions in a dose-dependent way. Down-regulated by Na(+) ions. Inhibited by Na(+)/K(+)-ATPase inhibitor ouabain and H(+)/K(+)-ATPase inhibitor SCH-28080 with an intermediate sensitivity to completely resistant Na(+)/K(+)-ATPases and highly sensitive H(+)/K(+)-ATPases. In terms of biological role, the catalytic subunit of a H(+)/K(+) ATPase and/or Na(+)/K(+) ATPase pump which transports K(+) ions in exchange for Na(+) and/or H(+) ions across the apical membrane of epithelial cells. Uses ATP as an energy source to pump K(+) ions into the cell while transporting Na(+) and/or H(+) ions to the extracellular compartment. Involved in the maintenance of electrolyte homeostasis through K(+) ion absorption in kidney and colon. In the airway epithelium, may play a primary role in mucus acidification regulating its viscosity and clearance. The chain is Potassium-transporting ATPase alpha chain 2 from Homo sapiens (Human).